A 616-amino-acid polypeptide reads, in one-letter code: Zinc metalloproteinase-disintegrin-like VLAIP-A (616 aa).

Residues 1–20 (MMQVLLVTISLAVFPYQGSS) form the signal peptide. Positions 21-194 (IILESGNVND…KASQLNLTPE (174 aa)) are excised as a propeptide. Glutamine 195 is subject to Pyrrolidone carboxylic acid. A Peptidase M12B domain is found at 203–399 (KYIKLVIVAD…KMPQCILNKP (197 aa)). 3 cysteine pairs are disulfide-bonded: cysteine 314–cysteine 394, cysteine 354–cysteine 378, and cysteine 356–cysteine 361. Residue histidine 339 coordinates Zn(2+). The active site involves glutamate 340. Zn(2+)-binding residues include histidine 343 and histidine 349. Asparagine 377 carries N-linked (GlcNAc...) asparagine glycosylation. One can recognise a Disintegrin domain in the interval 407 to 493 (PAVCGNYLVE…ECPTDQFQRN (87 aa)). The Ca(2+) site is built by valine 409, asparagine 412, leucine 414, glutamate 416, glutamate 419, and aspartate 422. Cystine bridges form between cysteine 410–cysteine 439, cysteine 421–cysteine 434, cysteine 423–cysteine 429, cysteine 433–cysteine 456, cysteine 447–cysteine 453, cysteine 452–cysteine 478, cysteine 465–cysteine 485, cysteine 472–cysteine 504, cysteine 497–cysteine 509, cysteine 516–cysteine 566, cysteine 531–cysteine 577, cysteine 544–cysteine 554, cysteine 561–cysteine 603, and cysteine 597–cysteine 609. The short motif at 471-473 (ECD) is the D/ECD-tripeptide element.

It belongs to the venom metalloproteinase (M12B) family. P-III subfamily. P-IIIc sub-subfamily. As to quaternary structure, heterodimer; disulfide-linked. Zn(2+) serves as cofactor. Post-translationally, the N-terminus is blocked. In terms of tissue distribution, expressed by the venom gland.

It is found in the secreted. Its activity is regulated as follows. Inhibited by EDTA or 1,10-phenanthroline. Not inhibited by PMSF. Functionally, snake venom zinc metalloprotease that hydrolyzes the alpha-chain (FGA) and more slowly the beta-chain (FGB) of fibrinogen, without affecting the gamma-chain. Cleaves alpha-chain of fibrinogen at '432-Lys-|-Leu-433' and '535-Pro-|-Met-536' bonds. Induces apoptosis in vascular endothelial cells and inhibits endothelial cell adhesion to extracellular matrix proteins such as fibrinogen, fibronectin, vitronectin, collagen I, and collagen IV. Also hydrolyzes azocasein, and insulin B-chain (at the '38-Ala-|-Leu-39' bond). This chain is Zinc metalloproteinase-disintegrin-like VLAIP-A, found in Macrovipera lebetinus (Levantine viper).